The following is a 178-amino-acid chain: ATP synthase subunit delta (178 aa).

It belongs to the ATPase delta chain family. As to quaternary structure, F-type ATPases have 2 components, F(1) - the catalytic core - and F(0) - the membrane proton channel. F(1) has five subunits: alpha(3), beta(3), gamma(1), delta(1), epsilon(1). F(0) has three main subunits: a(1), b(2) and c(10-14). The alpha and beta chains form an alternating ring which encloses part of the gamma chain. F(1) is attached to F(0) by a central stalk formed by the gamma and epsilon chains, while a peripheral stalk is formed by the delta and b chains.

Its subcellular location is the cell inner membrane. F(1)F(0) ATP synthase produces ATP from ADP in the presence of a proton or sodium gradient. F-type ATPases consist of two structural domains, F(1) containing the extramembraneous catalytic core and F(0) containing the membrane proton channel, linked together by a central stalk and a peripheral stalk. During catalysis, ATP synthesis in the catalytic domain of F(1) is coupled via a rotary mechanism of the central stalk subunits to proton translocation. In terms of biological role, this protein is part of the stalk that links CF(0) to CF(1). It either transmits conformational changes from CF(0) to CF(1) or is implicated in proton conduction. This Teredinibacter turnerae (strain ATCC 39867 / T7901) protein is ATP synthase subunit delta.